The chain runs to 378 residues: Branched-chain-amino-acid aminotransferase (378 aa).

At Lys-213 the chain carries N6-(pyridoxal phosphate)lysine.

This sequence belongs to the class-IV pyridoxal-phosphate-dependent aminotransferase family. In terms of assembly, homodimer. It depends on pyridoxal 5'-phosphate as a cofactor.

The enzyme catalyses L-leucine + 2-oxoglutarate = 4-methyl-2-oxopentanoate + L-glutamate. The catalysed reaction is L-isoleucine + 2-oxoglutarate = (S)-3-methyl-2-oxopentanoate + L-glutamate. It carries out the reaction L-valine + 2-oxoglutarate = 3-methyl-2-oxobutanoate + L-glutamate. Its function is as follows. Catalyzes the first reaction in the catabolism of the essential branched chain amino acids leucine, isoleucine, and valine. The polypeptide is Branched-chain-amino-acid aminotransferase (bcaA) (Dictyostelium discoideum (Social amoeba)).